Reading from the N-terminus, the 121-residue chain is Large ribosomal subunit protein bL12 (121 aa).

This sequence belongs to the bacterial ribosomal protein bL12 family. As to quaternary structure, homodimer. Part of the ribosomal stalk of the 50S ribosomal subunit. Forms a multimeric L10(L12)X complex, where L10 forms an elongated spine to which 2 to 4 L12 dimers bind in a sequential fashion. Binds GTP-bound translation factors.

Functionally, forms part of the ribosomal stalk which helps the ribosome interact with GTP-bound translation factors. Is thus essential for accurate translation. This is Large ribosomal subunit protein bL12 from Pseudomonas savastanoi pv. phaseolicola (strain 1448A / Race 6) (Pseudomonas syringae pv. phaseolicola (strain 1448A / Race 6)).